Consider the following 310-residue polypeptide: Acetaldehyde dehydrogenase 1 (310 aa).

Residue 12 to 15 (SGNI) participates in NAD(+) binding. The Acyl-thioester intermediate role is filled by C127. NAD(+) contacts are provided by residues 163–171 (SAGPGTRAN) and N282.

It belongs to the acetaldehyde dehydrogenase family.

It catalyses the reaction acetaldehyde + NAD(+) + CoA = acetyl-CoA + NADH + H(+). The polypeptide is Acetaldehyde dehydrogenase 1 (Mycobacterium sp. (strain KMS)).